The chain runs to 362 residues: Aminomethyltransferase (362 aa).

It belongs to the GcvT family. The glycine cleavage system is composed of four proteins: P, T, L and H.

The enzyme catalyses N(6)-[(R)-S(8)-aminomethyldihydrolipoyl]-L-lysyl-[protein] + (6S)-5,6,7,8-tetrahydrofolate = N(6)-[(R)-dihydrolipoyl]-L-lysyl-[protein] + (6R)-5,10-methylene-5,6,7,8-tetrahydrofolate + NH4(+). The glycine cleavage system catalyzes the degradation of glycine. The polypeptide is Aminomethyltransferase (Chromobacterium violaceum (strain ATCC 12472 / DSM 30191 / JCM 1249 / CCUG 213 / NBRC 12614 / NCIMB 9131 / NCTC 9757 / MK)).